An 88-amino-acid polypeptide reads, in one-letter code: Apolipoprotein C-I (88 aa).

The N-terminal stretch at 1–26 (MRLFISLPILIVVLAMALEGPAPAQA) is a signal peptide.

Belongs to the apolipoprotein C1 family.

The protein localises to the secreted. Functionally, inhibitor of lipoprotein binding to the low density lipoprotein (LDL) receptor, LDL receptor-related protein, and very low density lipoprotein (VLDL) receptor. Associates with high density lipoproteins (HDL) and the triacylglycerol-rich lipoproteins in the plasma and makes up about 10% of the protein of the VLDL and 2% of that of HDL. Appears to interfere directly with fatty acid uptake and is also the major plasma inhibitor of cholesteryl ester transfer protein (CETP). Modulates the interaction of APOE with beta-migrating VLDL and inhibits binding of beta-VLDL to the LDL receptor-related protein. Binds free fatty acids and reduces their intracellular esterification. This is Apolipoprotein C-I (Apoc1) from Neotoma lepida (Desert woodrat).